Consider the following 181-residue polypeptide: CD160 antigen (181 aa).

Positions Met1–Gly24 are cleaved as a signal peptide. Residues Gly25–Thr133 form the Ig-like V-type domain. N-linked (GlcNAc...) asparagine glycosylation is present at Asn28. 2 disulfides stabilise this stretch: Cys44-Cys112 and Cys61-Cys68. The N-linked (GlcNAc...) asparagine glycan is linked to Asn137. Ser159 carries the GPI-anchor amidated serine lipid modification. A propeptide spans Ser160–Leu181 (removed in mature form).

In terms of assembly, homomultimer; disulfide-linked. Interacts with HLA-G. Interacts with HLA-A2-B2M in complex with an HIV-derived peptide. Interacts with TNFRSF14 (via cysteine-rich domain 1); this interaction is direct. Interacts with LCK and CD247/CD3 zeta chain. Expression is restricted to functional NK and cytotoxic T lymphocytes. Expressed in viral-specific effector memory and terminally differentiated effector memory CD8+ T cells. Expressed in memory and activated CD4+ T cell subsets (at protein level). Expressed at high levels in intraepithelial lymphocytes (at protein level). Expressed in both alpha-beta and gamma-delta CD8+ T cell subsets (at protein level). Expressed in umbilical vein endothelial cells (at protein level). Expressed in monocytes and at lower levels in B cells. Isoform 3: Expressed exclusively in activated NK cells (at protein level).

It localises to the cell membrane. The protein localises to the secreted. Receptor on immune cells capable to deliver stimulatory or inhibitory signals that regulate cell activation and differentiation. Exists as a GPI-anchored and as a transmembrane form, each likely initiating distinct signaling pathways via phosphoinositol 3-kinase in activated NK cells and via LCK and CD247/CD3 zeta chain in activated T cells. Receptor for both classical and non-classical MHC class I molecules. In the context of acute viral infection, recognizes HLA-C and triggers NK cell cytotoxic activity, likely playing a role in anti-viral innate immune response. On CD8+ T cells, binds HLA-A2-B2M in complex with a viral peptide and provides a costimulatory signal to activated/memory T cells. Upon persistent antigen stimulation, such as occurs during chronic viral infection, may progressively inhibit TCR signaling in memory CD8+ T cells, contributing to T cell exhaustion. On endothelial cells, recognizes HLA-G and controls angiogenesis in immune privileged sites. Receptor or ligand for TNF superfamily member TNFRSF14, participating in bidirectional cell-cell contact signaling between antigen presenting cells and lymphocytes. Upon ligation of TNFRSF14, provides stimulatory signal to NK cells enhancing IFNG production and anti-tumor immune response. On activated CD4+ T cells, interacts with TNFRSF14 and down-regulates CD28 costimulatory signaling, restricting memory and alloantigen-specific immune response. In the context of bacterial infection, acts as a ligand for TNFRSF14 on epithelial cells, triggering the production of antimicrobial proteins and pro-inflammatory cytokines. In terms of biological role, the soluble GPI-cleaved form, usually released by activated lymphocytes, might play an immune regulatory role by limiting lymphocyte effector functions. The sequence is that of CD160 antigen from Homo sapiens (Human).